The chain runs to 499 residues: UDP-N-acetylmuramoylalanine--D-glutamate ligase (499 aa).

Residue 129–135 coordinates ATP; that stretch reads GTNGKTT.

Belongs to the MurCDEF family.

It is found in the cytoplasm. It carries out the reaction UDP-N-acetyl-alpha-D-muramoyl-L-alanine + D-glutamate + ATP = UDP-N-acetyl-alpha-D-muramoyl-L-alanyl-D-glutamate + ADP + phosphate + H(+). It participates in cell wall biogenesis; peptidoglycan biosynthesis. Cell wall formation. Catalyzes the addition of glutamate to the nucleotide precursor UDP-N-acetylmuramoyl-L-alanine (UMA). This chain is UDP-N-acetylmuramoylalanine--D-glutamate ligase, found in Ralstonia nicotianae (strain ATCC BAA-1114 / GMI1000) (Ralstonia solanacearum).